The following is a 278-amino-acid chain: Small ribosomal subunit protein uS3 (278 aa).

The 69-residue stretch at 38–106 (IRKLLSKGME…QVQLNILEVK (69 aa)) folds into the KH type-2 domain. Residues 213-278 (RQAQAAARAG…APAPAENQEG (66 aa)) are disordered. Over residues 214-223 (QAQAAARAGV) the composition is skewed to low complexity. The segment covering 232 to 253 (RGGERPSRGSRGDRPTRADRGG) has biased composition (basic and acidic residues). Low complexity predominate over residues 259-278 (EATGAATEQAAPAPAENQEG).

The protein belongs to the universal ribosomal protein uS3 family. Part of the 30S ribosomal subunit. Forms a tight complex with proteins S10 and S14.

Functionally, binds the lower part of the 30S subunit head. Binds mRNA in the 70S ribosome, positioning it for translation. The chain is Small ribosomal subunit protein uS3 from Nocardioides sp. (strain ATCC BAA-499 / JS614).